The chain runs to 430 residues: Tol-Pal system protein TolB (430 aa).

The first 26 residues, 1–26 (MSLMTKLGLRALVASCLIAAGGAAHA), serve as a signal peptide directing secretion.

Belongs to the TolB family. In terms of assembly, the Tol-Pal system is composed of five core proteins: the inner membrane proteins TolA, TolQ and TolR, the periplasmic protein TolB and the outer membrane protein Pal. They form a network linking the inner and outer membranes and the peptidoglycan layer.

The protein localises to the periplasm. Its function is as follows. Part of the Tol-Pal system, which plays a role in outer membrane invagination during cell division and is important for maintaining outer membrane integrity. This Paraburkholderia phymatum (strain DSM 17167 / CIP 108236 / LMG 21445 / STM815) (Burkholderia phymatum) protein is Tol-Pal system protein TolB.